The primary structure comprises 252 residues: Protein IRON-RELATED TRANSCRIPTION FACTOR 3 (252 aa).

A basic motif region spans residues 36–49 (PRKVHKSEREKLKR). The region spanning 36–86 (PRKVHKSEREKLKRGHLNDLFGELGNMLEADRQSNGKACILTDTTRILRDL) is the bHLH domain. The tract at residues 50–86 (GHLNDLFGELGNMLEADRQSNGKACILTDTTRILRDL) is helix-loop-helix motif. The stretch at 76–131 (LTDTTRILRDLLSQVKSLRQENSTLQNESNYVTMERNELQDENGALRSEISDLQNE) forms a coiled coil. Residues 135–252 (RATGSPGWGH…GLPRMEDEQM (118 aa)) are disordered. Over residues 162 to 176 (PSQQPMQPSPMTTST) the composition is skewed to low complexity. The segment covering 208-219 (PAEDPEPSEDQE) has biased composition (acidic residues).

The protein belongs to the bHLH protein family.

Its subcellular location is the nucleus. Functionally, transcription factor that acts as a negative regulator of the iron deficiency response. Suppresses the induction of iron deficiency responsive genes, such as NAS1, NAS2, IRO2, IRT1, YSL15, and NRAMP1. In Oryza sativa subsp. japonica (Rice), this protein is Protein IRON-RELATED TRANSCRIPTION FACTOR 3.